A 170-amino-acid chain; its full sequence is dCTP pyrophosphatase 1 (170 aa).

A disordered region spans residues 1 to 25 (MSQAGTGVCGNGGQEDSAAAGPFSF). The residue at position 2 (S2) is an N-acetylserine. S2 is subject to Phosphoserine. Substrate-binding positions include H38 and 47–51 (WEQFH). E63 and E66 together coordinate Mg(2+). W73 contacts substrate. The Mg(2+) site is built by E95 and D98. Y102 contacts substrate. A disordered region spans residues 149-170 (LSENEAVGSGDPASELGNQAST).

Homotetramer. Mg(2+) is required as a cofactor.

The protein resides in the cytoplasm. It localises to the cytosol. It catalyses the reaction dCTP + H2O = dCMP + diphosphate + H(+). Its function is as follows. Hydrolyzes deoxynucleoside triphosphates (dNTPs) to the corresponding nucleoside monophosphates. Has a strong preference for dCTP and its analogs including 5-iodo-dCTP and 5-methyl-dCTP for which it may even have a higher efficiency. May protect DNA or RNA against the incorporation of these genotoxic nucleotide analogs through their catabolism. The polypeptide is dCTP pyrophosphatase 1 (Rattus norvegicus (Rat)).